A 1837-amino-acid chain; its full sequence is Nucleoporin nup211 (1837 aa).

Coiled coils occupy residues 59–378 (EVNY…YDEI), 415–519 (YKQK…ELDL), and 559–625 (VFRN…QLRY). T650 is subject to Phosphothreonine. Coiled coils occupy residues 661–1163 (EQTS…NKLL), 1222–1637 (LDNR…ENTH), and 1675–1712 (KAKISVYEKKTRDLQNKITQLEETIENLNKQLSNPEKT). Residues 1464-1521 (KDSNHQLQESASSDAEQITKEQFEQLKSEKERTEKELADSKNELEHLQSEAVDADGKT) form a disordered region. The segment covering 1468 to 1479 (HQLQESASSDAE) has biased composition (polar residues). Residues 1480–1521 (QITKEQFEQLKSEKERTEKELADSKNELEHLQSEAVDADGKT) show a composition bias toward basic and acidic residues. S1558 bears the Phosphoserine mark. T1560 is subject to Phosphothreonine. At S1563 the chain carries Phosphoserine. Disordered stretches follow at residues 1602 to 1642 (EKEK…NIDD) and 1700 to 1837 (ENLN…KKAK). Positions 1617–1628 (KSQRIKELEEQA) are enriched in basic and acidic residues. Composition is skewed to polar residues over residues 1700 to 1730 (ENLNKQLSNPEKTDESTSSVTETKPVTSKPT), 1753 to 1763 (KSLSARLQGTG), 1795 to 1814 (IATSKNAAQNAKELSSTAKS), and 1827 to 1837 (GGSSSNQKKAK).

The protein resides in the cytoplasm. The protein localises to the nucleus. Functionally, functions as a component of the nuclear pore complex (NPC). NPC components, collectively referred to as nucleoporins (NUPs), can play the role of both NPC structural components and of docking or interaction partners for transiently associated nuclear transport factors. Active directional transport is assured by both, a Phe-Gly (FG) repeat affinity gradient for these transport factors across the NPC and a transport cofactor concentration gradient across the nuclear envelope. The chain is Nucleoporin nup211 (nup211) from Schizosaccharomyces pombe (strain 972 / ATCC 24843) (Fission yeast).